The following is a 218-amino-acid chain: Sodium channel regulatory subunit beta-1 (218 aa).

Positions 1–18 (MGRLLAFVVGAALVSSAW) are cleaved as a signal peptide. Residues 19–157 (GGCVEVDSET…DKANRDMASI (139 aa)) lie on the Extracellular side of the membrane. Disulfide bonds link C21–C43 and C40–C121. The region spanning 22–150 (VEVDSETEAV…KIHLEVVDKA (129 aa)) is the Ig-like C2-type domain. N93, N110, N114, and N135 each carry an N-linked (GlcNAc...) asparagine glycan. Residues 158–179 (VSEIMMYVLIVVLTIWLVAEMV) form a helical membrane-spanning segment. Residues 180–218 (YCYKKIAAATEAAAQENASEYLAITSESKENCTGVQVAE) are Cytoplasmic-facing.

It belongs to the sodium channel auxiliary subunit SCN1B (TC 8.A.17) family. In terms of assembly, a voltage-gated sodium (Nav) channel consists of an ion-conducting pore-forming alpha subunit functional on its own that is regulated by one or more beta subunits. Interacts with SCN1A; regulatory subunit of SCN1A/Nav1.1. Interacts with SCN3A; regulatory subunit of SCN3A/Nav1.3. Interacts with SCN4A; regulatory subunit of SCN4A/Nav1.4. Interacts with SCN5A; regulatory subunit of SCN5A/Nav1.5. Interacts with SCN8A; regulatory subunit of SCN8A/Nav1.6. Interacts with SCN9A; regulatory subunit of SCN9A/Nav1.7. Interacts with SCN10A; regulatory subunit of SCN10A/Nav1.8. Interacts with NFASC. Interacts with TMEM65.

The protein resides in the cell membrane. Its subcellular location is the perikaryon. It localises to the cell projection. It is found in the axon. Its function is as follows. Regulatory subunit of multiple voltage-gated sodium (Nav) channels directly mediating the depolarization of excitable membranes. Navs, also called VGSCs (voltage-gated sodium channels) or VDSCs (voltage-dependent sodium channels), operate by switching between closed and open conformations depending on the voltage difference across the membrane. In the open conformation they allow Na(+) ions to selectively pass through the pore, along their electrochemical gradient. The influx of Na+ ions provokes membrane depolarization, initiating the propagation of electrical signals throughout cells and tissues. The accessory beta subunits participate in localization and functional modulation of the Nav channels. Modulates the activity of SCN1A/Nav1.1, SCN2A/Nav1.2, SCN3A/Nav1.3, SCN4A/Nav1.4, SCN5A/Nav1.5, SCN8A/Nav1.6, SCN9A/Nav1.7 and SCN10A/Nav1.8. The sequence is that of Sodium channel regulatory subunit beta-1 from Oryctolagus cuniculus (Rabbit).